We begin with the raw amino-acid sequence, 447 residues long: MNAWEVNFDGLVGLTHHYAGLSFGNEASTRHRFQVSNPRLAAKQGLLKMKKLADAGFPQAVIPPHERPFIPVLRQLGFSGSDEQVLEKVARQAPHWLSSVSSASPMWVANAATIAPSADTLDGKVHLTVANLNNKFHRSLEAPVTESLLKAIFNDEEKFSVHSALPQVALLGDEGAANHNRLGGHYGEPGMQLFVYGREEGNDTRPSRYPARQTREASEAVARLNQVNPQQVIFAQQNPDVIDQGVFHNDVIAVSNRQVLFCHQQAFARQSQLLANLRARVNGFMAIEVPATQVSVSDAVSTYLFNSQLLSRDDGSMVLVLPQECREHAGVWRYLNELLAADNPISELKVFDLRESMANGGGPACLRLRVVLTEEERRAVNPAVMMNDTLFNALNDWVDRYYRDRLTAADLADPQLLREGREALDTLTQLLDLGSVYPFQREGGGNG.

Substrate is bound by residues 19-28 (AGLSFGNEAS), Asn110, and 137-138 (HR). Glu174 is an active-site residue. Arg212 lines the substrate pocket. His248 is an active-site residue. Positions 250 and 359 each coordinate substrate. Cys365 serves as the catalytic Nucleophile.

It belongs to the succinylarginine dihydrolase family. Homodimer.

The enzyme catalyses N(2)-succinyl-L-arginine + 2 H2O + 2 H(+) = N(2)-succinyl-L-ornithine + 2 NH4(+) + CO2. The protein operates within amino-acid degradation; L-arginine degradation via AST pathway; L-glutamate and succinate from L-arginine: step 2/5. Functionally, catalyzes the hydrolysis of N(2)-succinylarginine into N(2)-succinylornithine, ammonia and CO(2). In Escherichia coli O81 (strain ED1a), this protein is N-succinylarginine dihydrolase.